The following is a 614-amino-acid chain: Zinc metalloproteinase-disintegrin-like protein F1 (614 aa).

Positions 1–20 (MLQVLLVTICLAVFPYQGSS) are cleaved as a signal peptide. The propeptide occupies 21 to 192 (IILESGNVND…IKASQFILTP (172 aa)). The short motif at 167-173 (PKKCGVT) is the Cys-switch; controls maturation element. Pyrrolidone carboxylic acid (Glu) is present on glutamate 193. The Peptidase M12B domain occupies 202–398 (KYIKLAIVVD…HTPRCILNEP (197 aa)). Residue asparagine 221 is glycosylated (N-linked (GlcNAc...) asparagine). 3 cysteine pairs are disulfide-bonded: cysteine 313-cysteine 393, cysteine 353-cysteine 377, and cysteine 355-cysteine 360. Position 338 (histidine 338) interacts with Zn(2+). The Metal-binding motif lies at 338–349 (HELGHNLGINHD). The active-site Proton acceptor is glutamate 339. Residues histidine 342 and histidine 348 each contribute to the Zn(2+) site. The 87-residue stretch at 406–492 (PAVCGNYVVE…ECPMDHIQKN (87 aa)) folds into the Disintegrin domain. Valine 408, asparagine 411, glutamate 415, glutamate 418, and aspartate 421 together coordinate Ca(2+). Intrachain disulfides connect cysteine 409/cysteine 438, cysteine 420/cysteine 433, cysteine 422/cysteine 428, cysteine 432/cysteine 455, cysteine 446/cysteine 452, cysteine 451/cysteine 477, cysteine 464/cysteine 484, cysteine 471/cysteine 503, cysteine 496/cysteine 508, cysteine 515/cysteine 565, cysteine 530/cysteine 575, cysteine 543/cysteine 553, cysteine 560/cysteine 601, and cysteine 595/cysteine 607. The D/ECD-tripeptide motif lies at 470–472 (ECD). Positions 472, 475, and 487 each coordinate Ca(2+). Asparagine 534 carries an N-linked (GlcNAc...) asparagine glycan.

It belongs to the venom metalloproteinase (M12B) family. P-III subfamily. P-IIIa sub-subfamily. As to quaternary structure, monomer. Requires Zn(2+) as cofactor. N-glycosylated. Post-translationally, the N-terminus is blocked. In terms of tissue distribution, expressed by the venom gland (at protein level). Expressed by the venom gland.

Its subcellular location is the secreted. With respect to regulation, the alpha-fibrinogenase activity is inhibited by EDTA, but not by pefabloc. Its function is as follows. Zinc metalloprotease that has fibrinogenolytic activity. Does not have hemorrhagic activity in rats. Cleaves insulin B chain at '38-Ala-|-Leu-39' and '40-Tyr-|-Leu-41' bonds. Hydrolyzes only partially and weakly isolated extracellular matrix (ECM) bovine fibronectin and basal membrane (BM) protein human collagen IV in vitro. Murine laminin is not hydrolyzed, neither isolated nor in a solubilized BM preparation. Nidogen is hydrolyzed at '350-Ser-|-Phe-351' bond in a solubilized BM preparation. Hydrolyzes plasma proteins involved in blood coagulation in vitro. Has alpha-fibrinogenase activity cleaving human fibrinogen alpha chain at '432-Lys-|-Leu-433' bond, but does not cleave beta or gamma chains. Does not cleave fibrin. Hydrolyzes only partially bovine prothrombin at '200-Ser-|-Gly-201' bond, factor X (FX) heavy chain, and very slowly, FX light chain and plasminogen in vitro, without activating any of them. Has no effect in plasma thrombin generation. Does not inhibit platelet aggregation induced by collagen in vitro. May have a delayed pathological action as an anticoagulant in envenomed patients after they received serotherapy as it is not recognized by the venom antiserum. The polypeptide is Zinc metalloproteinase-disintegrin-like protein F1 (Vipera ammodytes ammodytes (Western sand viper)).